A 762-amino-acid chain; its full sequence is Probable inorganic carbon transporter subunit DabA (762 aa).

Residues C279, D281, H461, and C476 each contribute to the Zn(2+) site.

The protein belongs to the inorganic carbon transporter (TC 9.A.2) DabA family. In terms of assembly, forms a complex with DabB. Zn(2+) is required as a cofactor.

It localises to the cell inner membrane. In terms of biological role, part of an energy-coupled inorganic carbon pump. The polypeptide is Probable inorganic carbon transporter subunit DabA (Legionella pneumophila subsp. pneumophila (strain Philadelphia 1 / ATCC 33152 / DSM 7513)).